We begin with the raw amino-acid sequence, 202 residues long: Probable chemoreceptor glutamine deamidase CheD 2 (202 aa).

The protein belongs to the CheD family.

The enzyme catalyses L-glutaminyl-[protein] + H2O = L-glutamyl-[protein] + NH4(+). Probably deamidates glutamine residues to glutamate on methyl-accepting chemotaxis receptors (MCPs), playing an important role in chemotaxis. This Shewanella oneidensis (strain ATCC 700550 / JCM 31522 / CIP 106686 / LMG 19005 / NCIMB 14063 / MR-1) protein is Probable chemoreceptor glutamine deamidase CheD 2.